The sequence spans 215 residues: Deoxyribose-phosphate aldolase (215 aa).

The Proton donor/acceptor role is filled by Asp-89. Lys-150 functions as the Schiff-base intermediate with acetaldehyde in the catalytic mechanism. Residue Lys-174 is the Proton donor/acceptor of the active site.

This sequence belongs to the DeoC/FbaB aldolase family. DeoC type 1 subfamily.

The protein resides in the cytoplasm. The enzyme catalyses 2-deoxy-D-ribose 5-phosphate = D-glyceraldehyde 3-phosphate + acetaldehyde. It functions in the pathway carbohydrate degradation; 2-deoxy-D-ribose 1-phosphate degradation; D-glyceraldehyde 3-phosphate and acetaldehyde from 2-deoxy-alpha-D-ribose 1-phosphate: step 2/2. Functionally, catalyzes a reversible aldol reaction between acetaldehyde and D-glyceraldehyde 3-phosphate to generate 2-deoxy-D-ribose 5-phosphate. This is Deoxyribose-phosphate aldolase from Natronomonas pharaonis (strain ATCC 35678 / DSM 2160 / CIP 103997 / JCM 8858 / NBRC 14720 / NCIMB 2260 / Gabara) (Halobacterium pharaonis).